The primary structure comprises 398 residues: 1-deoxy-D-xylulose 5-phosphate reductoisomerase (398 aa).

7 residues coordinate NADPH: threonine 10, glycine 11, serine 12, isoleucine 13, lysine 37, asparagine 38, and asparagine 124. Lysine 125 contributes to the 1-deoxy-D-xylulose 5-phosphate binding site. Residue glutamate 126 coordinates NADPH. Aspartate 150 provides a ligand contact to Mn(2+). 4 residues coordinate 1-deoxy-D-xylulose 5-phosphate: serine 151, glutamate 152, serine 186, and histidine 209. Residue glutamate 152 participates in Mn(2+) binding. Residue glycine 215 coordinates NADPH. 1-deoxy-D-xylulose 5-phosphate contacts are provided by serine 222, asparagine 227, lysine 228, and glutamate 231. Position 231 (glutamate 231) interacts with Mn(2+).

The protein belongs to the DXR family. Homodimer. It depends on Mg(2+) as a cofactor. Requires Mn(2+) as cofactor.

The enzyme catalyses 2-C-methyl-D-erythritol 4-phosphate + NADP(+) = 1-deoxy-D-xylulose 5-phosphate + NADPH + H(+). It functions in the pathway isoprenoid biosynthesis; isopentenyl diphosphate biosynthesis via DXP pathway; isopentenyl diphosphate from 1-deoxy-D-xylulose 5-phosphate: step 1/6. In terms of biological role, catalyzes the NADPH-dependent rearrangement and reduction of 1-deoxy-D-xylulose-5-phosphate (DXP) to 2-C-methyl-D-erythritol 4-phosphate (MEP). The chain is 1-deoxy-D-xylulose 5-phosphate reductoisomerase from Buchnera aphidicola subsp. Schizaphis graminum (strain Sg).